The sequence spans 474 residues: Recombinase Flp protein (474 aa).

A Tyr recombinase Flp-type domain is found at 135–421 (LSNNVGAEIS…LYLYTYAQQK (287 aa)). Residue Tyr342 is the O-(3'-phospho-DNA)-tyrosine intermediate of the active site. Residues 426–474 (ADPNEQNRLFSSESPAHPFLTPQSTGSSTPLTWTAPKTLSTGLMTPGEE) are disordered. Polar residues-rich tracts occupy residues 429–439 (NEQNRLFSSES) and 446–468 (TPQS…STGL).

Belongs to the 'phage' integrase family.

Its function is as follows. Catalyzes the recombination between the large inverted repetitions of the plasmid. This chain is Recombinase Flp protein, found in Zygosaccharomyces bailii.